Reading from the N-terminus, the 296-residue chain is Phosphoribosylaminoimidazole-succinocarboxamide synthase (296 aa).

The protein belongs to the SAICAR synthetase family.

The enzyme catalyses 5-amino-1-(5-phospho-D-ribosyl)imidazole-4-carboxylate + L-aspartate + ATP = (2S)-2-[5-amino-1-(5-phospho-beta-D-ribosyl)imidazole-4-carboxamido]succinate + ADP + phosphate + 2 H(+). It participates in purine metabolism; IMP biosynthesis via de novo pathway; 5-amino-1-(5-phospho-D-ribosyl)imidazole-4-carboxamide from 5-amino-1-(5-phospho-D-ribosyl)imidazole-4-carboxylate: step 1/2. In Pelobacter propionicus (strain DSM 2379 / NBRC 103807 / OttBd1), this protein is Phosphoribosylaminoimidazole-succinocarboxamide synthase.